We begin with the raw amino-acid sequence, 367 residues long: tRNA/tmRNA (uracil-C(5))-methyltransferase (367 aa).

Q190, Y218, N223, E239, and D299 together coordinate S-adenosyl-L-methionine. The active-site Nucleophile is C324. The active-site Proton acceptor is the E358.

The protein belongs to the class I-like SAM-binding methyltransferase superfamily. RNA M5U methyltransferase family. TrmA subfamily.

It catalyses the reaction uridine(54) in tRNA + S-adenosyl-L-methionine = 5-methyluridine(54) in tRNA + S-adenosyl-L-homocysteine + H(+). The enzyme catalyses uridine(341) in tmRNA + S-adenosyl-L-methionine = 5-methyluridine(341) in tmRNA + S-adenosyl-L-homocysteine + H(+). In terms of biological role, dual-specificity methyltransferase that catalyzes the formation of 5-methyluridine at position 54 (m5U54) in all tRNAs, and that of position 341 (m5U341) in tmRNA (transfer-mRNA). The chain is tRNA/tmRNA (uracil-C(5))-methyltransferase from Dickeya chrysanthemi (strain Ech1591) (Dickeya zeae (strain Ech1591)).